The sequence spans 364 residues: Aminomethyltransferase (364 aa).

This sequence belongs to the GcvT family. The glycine cleavage system is composed of four proteins: P, T, L and H.

It catalyses the reaction N(6)-[(R)-S(8)-aminomethyldihydrolipoyl]-L-lysyl-[protein] + (6S)-5,6,7,8-tetrahydrofolate = N(6)-[(R)-dihydrolipoyl]-L-lysyl-[protein] + (6R)-5,10-methylene-5,6,7,8-tetrahydrofolate + NH4(+). Functionally, the glycine cleavage system catalyzes the degradation of glycine. This chain is Aminomethyltransferase, found in Escherichia coli O157:H7.